Consider the following 296-residue polypeptide: CRISPR-associated endonuclease Cas1 2 (296 aa).

Residues Glu157, His224, and Asp237 each contribute to the Mn(2+) site.

This sequence belongs to the CRISPR-associated endonuclease Cas1 family. In terms of assembly, homodimer, forms a heterotetramer with a Cas2 homodimer. It depends on Mg(2+) as a cofactor. Mn(2+) is required as a cofactor.

Functionally, CRISPR (clustered regularly interspaced short palindromic repeat), is an adaptive immune system that provides protection against mobile genetic elements (viruses, transposable elements and conjugative plasmids). CRISPR clusters contain spacers, sequences complementary to antecedent mobile elements, and target invading nucleic acids. CRISPR clusters are transcribed and processed into CRISPR RNA (crRNA). Acts as a dsDNA endonuclease. Involved in the integration of spacer DNA into the CRISPR cassette. In Chlorobaculum tepidum (strain ATCC 49652 / DSM 12025 / NBRC 103806 / TLS) (Chlorobium tepidum), this protein is CRISPR-associated endonuclease Cas1 2.